The primary structure comprises 102 residues: Small ribosomal subunit protein uS10 (102 aa).

It belongs to the universal ribosomal protein uS10 family. Part of the 30S ribosomal subunit.

Functionally, involved in the binding of tRNA to the ribosomes. This chain is Small ribosomal subunit protein uS10, found in Tropheryma whipplei (strain TW08/27) (Whipple's bacillus).